The chain runs to 380 residues: Cytochrome b (380 aa).

The next 4 helical transmembrane spans lie at 33 to 53, 77 to 98, 113 to 133, and 178 to 198; these read FGSLLGLCLITQILTGLFLAM, WLIRNLHANGASFFFICMYLHV, WNIGVILLLLVMMTAFVGYVL, and FFAFHFILPFIVAAAVILHLL. H83 and H97 together coordinate heme b. Residues H182 and H196 each contribute to the heme b site. H201 provides a ligand contact to a ubiquinone. 4 helical membrane-spanning segments follow: residues 226–246, 288–308, 320–340, and 347–367; these read YKDILGFIVMLLALITLALFS, LGGVLALLFSILVLMIVPILH, FSQFLFWVLVADMLILTWIGG, and FIIIGQIASILYFTLFLLLIP.

It belongs to the cytochrome b family. The cytochrome bc1 complex contains 3 respiratory subunits (MT-CYB, CYC1 and UQCRFS1), 2 core proteins (UQCRC1 and UQCRC2) and probably 6 low-molecular weight proteins. The cofactor is heme b.

The protein localises to the mitochondrion inner membrane. Component of the ubiquinol-cytochrome c reductase complex (complex III or cytochrome b-c1 complex) that is part of the mitochondrial respiratory chain. The b-c1 complex mediates electron transfer from ubiquinol to cytochrome c. Contributes to the generation of a proton gradient across the mitochondrial membrane that is then used for ATP synthesis. This chain is Cytochrome b (mt-cyb), found in Arapaima gigas (Arapaima).